We begin with the raw amino-acid sequence, 175 residues long: Major MR/P fimbria protein (175 aa).

Positions 1–23 are cleaved as a signal peptide; the sequence is MKLNKLALVLGLGLSVVAGSALA. A disulfide bond links Cys42 and Cys81.

Belongs to the fimbrial protein family.

Its subcellular location is the fimbrium. Its function is as follows. Major structural component of mannose-resistant/proteus-like fimbriae of P.mirabilis. This Proteus mirabilis (strain HI4320) protein is Major MR/P fimbria protein (mrpA).